Reading from the N-terminus, the 5801-residue chain is uncharacterized protein (5801 aa).

Disordered regions lie at residues 1114 to 1136 (DDDN…NKKI), 1827 to 1846 (KDRS…SINN), 2040 to 2109 (NNGE…SPLF), 3351 to 3392 (EKSN…NNSG), 5134 to 5168 (DNNN…SESD), 5478 to 5573 (ISDP…EDII), and 5600 to 5638 (HDKD…ETPG). 5 stretches are compositionally biased toward low complexity: residues 1118 to 1134 (NNSN…NNNK), 1831 to 1846 (SSSS…SINN), 2048 to 2096 (QQLQ…QQQQ), 3353 to 3392 (SNNN…NNSG), and 5135 to 5153 (NNNN…NNNN). A compositionally biased stretch (acidic residues) spans 5496-5573 (DNEEEEEDDD…EDEDEDEDII (78 aa)). A compositionally biased stretch (basic and acidic residues) spans 5617 to 5629 (QQPEKPQQPEKPQ).

This is an uncharacterized protein from Dictyostelium discoideum (Social amoeba).